The chain runs to 380 residues: Chaperone protein DnaJ (380 aa).

In terms of domain architecture, J spans 5-70; that stretch reads DYYEVLGVSK…QKRQTYDQYG (66 aa). The segment at 136–214 adopts a CR-type zinc-finger fold; sequence GKEVEIKIPT…CHGQGRVEKT (79 aa). Positions 149, 152, 166, 169, 188, 191, 202, and 205 each coordinate Zn(2+). CXXCXGXG motif repeat units lie at residues 149–156, 166–173, 188–195, and 202–209; these read CDPCDGSG, CTTCHGAG, CPTCQGQG, and CDSCHGQG.

The protein belongs to the DnaJ family. Homodimer. The cofactor is Zn(2+).

Its subcellular location is the cytoplasm. Functionally, participates actively in the response to hyperosmotic and heat shock by preventing the aggregation of stress-denatured proteins and by disaggregating proteins, also in an autonomous, DnaK-independent fashion. Unfolded proteins bind initially to DnaJ; upon interaction with the DnaJ-bound protein, DnaK hydrolyzes its bound ATP, resulting in the formation of a stable complex. GrpE releases ADP from DnaK; ATP binding to DnaK triggers the release of the substrate protein, thus completing the reaction cycle. Several rounds of ATP-dependent interactions between DnaJ, DnaK and GrpE are required for fully efficient folding. Also involved, together with DnaK and GrpE, in the DNA replication of plasmids through activation of initiation proteins. This chain is Chaperone protein DnaJ, found in Pseudoalteromonas translucida (strain TAC 125).